Consider the following 311-residue polypeptide: Avirulence protein ATR1 (311 aa).

Positions 1–15 (MRVCYFVLVPSVALA) are cleaved as a signal peptide. The RxLR-dEER motif lies at 48–62 (RALRAQTALDDDEER). 2 WY domain regions span residues 127–209 (DEAL…VKCV) and 210–311 (ESED…IYSV).

It belongs to the RxLR effector family. As to quaternary structure, monomer. Interacts with defense protein RPP1 from several ecotypes including RPP1-NdA, RPP1-WsB, RPP1-EstA and RPP1-ZdrA, via their leucine-rich repeats (LLRs).

It is found in the secreted. The protein resides in the host cytoplasm. Its function is as follows. Secreted effector that acts as an elicitor of hypersensitive response (HR) specifically on plants carrying both defense protein RPP1 from several ecotypes including RPP1-NdA, RPP1-WsB, RPP1-EstA and RPP1-ZdrA. The sequence is that of Avirulence protein ATR1 from Hyaloperonospora arabidopsidis (strain Emoy2) (Downy mildew agent).